The primary structure comprises 199 residues: Recombination protein RecR (199 aa).

Residues Cys57 to Cys72 form a C4-type zinc finger. Residues Asp81–Pro176 enclose the Toprim domain.

It belongs to the RecR family.

Its function is as follows. May play a role in DNA repair. It seems to be involved in an RecBC-independent recombinational process of DNA repair. It may act with RecF and RecO. In Shewanella halifaxensis (strain HAW-EB4), this protein is Recombination protein RecR.